Consider the following 247-residue polypeptide: Small ribosomal subunit protein uS2 (247 aa).

The protein belongs to the universal ribosomal protein uS2 family.

The chain is Small ribosomal subunit protein uS2 from Ralstonia pickettii (strain 12J).